A 524-amino-acid polypeptide reads, in one-letter code: ORC1-type DNA replication protein 4 (524 aa).

Residues 1–23 are compositionally biased toward polar residues; the sequence is MTDKSNNPAPASDPSTTETSNDA. The segment at 1–67 is disordered; sequence MTDKSNNPAP…DDPSDEASRG (67 aa). ATP contacts are provided by residues 128–132, tyrosine 325, and arginine 337; that span reads TGKTA.

The protein belongs to the CDC6/cdc18 family.

In terms of biological role, involved in regulation of DNA replication. In Haloarcula marismortui (strain ATCC 43049 / DSM 3752 / JCM 8966 / VKM B-1809) (Halobacterium marismortui), this protein is ORC1-type DNA replication protein 4 (cdc6d).